A 192-amino-acid chain; its full sequence is GTP cyclohydrolase-2 (192 aa).

Residue Arg50–Glu54 coordinates GTP. Zn(2+) is bound by residues Cys55, Cys66, and Cys68. GTP-binding positions include Glu92–Arg94 and Thr114. Asp126 (proton acceptor) is an active-site residue. Catalysis depends on Arg128, which acts as the Nucleophile. Residues Thr149 and Lys154 each contribute to the GTP site.

It belongs to the GTP cyclohydrolase II family. Requires Zn(2+) as cofactor.

The enzyme catalyses GTP + 4 H2O = 2,5-diamino-6-hydroxy-4-(5-phosphoribosylamino)-pyrimidine + formate + 2 phosphate + 3 H(+). It participates in cofactor biosynthesis; riboflavin biosynthesis; 5-amino-6-(D-ribitylamino)uracil from GTP: step 1/4. In terms of biological role, catalyzes the conversion of GTP to 2,5-diamino-6-ribosylamino-4(3H)-pyrimidinone 5'-phosphate (DARP), formate and pyrophosphate. This Helicobacter pylori (strain P12) protein is GTP cyclohydrolase-2.